The chain runs to 218 residues: Ribonuclease T (218 aa).

Positions 22-196 (VVVDVETAGF…YDAMKTAELF (175 aa)) constitute an Exonuclease domain. D25, E27, H183, and D188 together coordinate Mg(2+). H183 serves as the catalytic Proton donor/acceptor.

The protein belongs to the RNase T family. Homodimer. Mg(2+) serves as cofactor.

Trims short 3' overhangs of a variety of RNA species, leaving a one or two nucleotide 3' overhang. Responsible for the end-turnover of tRNA: specifically removes the terminal AMP residue from uncharged tRNA (tRNA-C-C-A). Also appears to be involved in tRNA biosynthesis. The polypeptide is Ribonuclease T (Hahella chejuensis (strain KCTC 2396)).